The sequence spans 723 residues: Malate synthase G (723 aa).

Residues Val118, 125–126, Ser274, and Arg311 contribute to the acetyl-CoA site; that span reads RY. The Proton acceptor role is filled by Arg338. Glyoxylate is bound by residues Arg338, Glu427, and 452–455; that span reads GFLD. Residues Glu427 and Asp455 each contribute to the Mg(2+) site. Residue Pro536 coordinates acetyl-CoA. Position 617 is a cysteine sulfenic acid (-SOH) (Cys617). Asp631 acts as the Proton donor in catalysis. Cys688 is modified (cysteine sulfenic acid (-SOH)).

This sequence belongs to the malate synthase family. GlcB subfamily. In terms of assembly, monomer. The cofactor is Mg(2+).

It localises to the cytoplasm. The enzyme catalyses glyoxylate + acetyl-CoA + H2O = (S)-malate + CoA + H(+). The protein operates within carbohydrate metabolism; glyoxylate cycle; (S)-malate from isocitrate: step 2/2. Its function is as follows. Involved in the glycolate utilization. Catalyzes the condensation and subsequent hydrolysis of acetyl-coenzyme A (acetyl-CoA) and glyoxylate to form malate and CoA. The chain is Malate synthase G from Shigella flexneri.